The following is a 223-amino-acid chain: Transcription factor bHLH75 (223 aa).

The tract at residues 58 to 100 (FPNLLHGNTRRKGNKEESGSKRRRKRSEEEEAMNGDETQKPKD) is disordered. The bHLH domain occupies 110-160 (QATDSHSLAERVRREKINERLKCLQDLVPGCYKAMGMAVMLDVIIDYVRSL).

As to quaternary structure, homodimer. As to expression, expressed in leaves, stems, and flowers.

The protein resides in the nucleus. This chain is Transcription factor bHLH75 (BHLH75), found in Arabidopsis thaliana (Mouse-ear cress).